We begin with the raw amino-acid sequence, 663 residues long: MDADNSTLPTEQSAVRETCDRDVTMSPRKRRRLSVSLEPELTEPEAAGTPGERCSTADTPESTASEPRSLFNSTPTEGNIAPFLTKHIKDQHASRNRFAPIDSSLPRRKADSKYCYRHRPDLKCRRQAVEPTVDQMQRDLSTLSQNDQQSIAHFWSLFSAAPSKHRNLMLQGIVAQCCFPQLSFLSASVRDLIRIDFVTALPPEISFKILSYLDTASLCSAAQVSHSWRALADDDVVWHRMCEQHIDRKCEKCGWGLPMLDRKRLKDTKRQVQLRAAGKEIAPNQRPQQQHRPWKAVYMDRFKVGTNWKYGRCTTTIFRGHTNGVMCLQFDDNILATGSYDATIKIWDIETGKEIRTLRGHESTIRCLQFDDTKLISGSLDRTIKVWNWRSGECISTYTGHQGGVLCLHFDSTTLASGSKDNTIKIWNFHDKSTRILRGHADWVNSVKLDTASRTVFSASDDLTVRIWDLDTGKCIHSYAGHVGQVQQVLPLPREFEFKHQSNCADDRSDRLSGSESPDHRGSHGYRSNNAPDQQPNTSAPPTEPMSPLFEALFTEDQGRPAPPRYMLTAALDLTLRLWEVHTGRCLRTFFGHIEGVWGLAADTLRFVSGAQDHMAKVWDPRTGTCERTFTGHRGPVTCVSLSDSRMATGSEDSEVRMYSFKA.

2 stretches are compositionally biased toward polar residues: residues 1-15 (MDAD…QSAV) and 56-77 (TADT…TPTE). Positions 1 to 80 (MDADNSTLPT…FNSTPTEGNI (80 aa)) are disordered. Residues 195–241 (IDFVTALPPEISFKILSYLDTASLCSAAQVSHSWRALADDDVVWHRM) enclose the F-box domain. 4 WD repeats span residues 320 to 359 (GHTN…RTLR), 361 to 399 (HEST…STYT), 400 to 437 (GHQG…TRIL), and 439 to 480 (GHAD…HSYA). The segment covering 503–522 (NCADDRSDRLSGSESPDHRG) has biased composition (basic and acidic residues). The disordered stretch occupies residues 503 to 547 (NCADDRSDRLSGSESPDHRGSHGYRSNNAPDQQPNTSAPPTEPMS). Polar residues predominate over residues 526–541 (YRSNNAPDQQPNTSAP). 3 WD repeats span residues 544-589 (EPMS…CLRT), 592-629 (GHIE…CERT), and 632-663 (GHRG…SFKA).

Belongs to the WD repeat MET30/SCONB/SCON-2 family. In terms of assembly, component of the SCF(sconB) E3 ubiquitin ligase complex.

Its pathway is protein modification; protein ubiquitination. In terms of biological role, component of the SCF(sconB) E3 ubiquitin ligase complex involved in the regulation of sulfur metabolite repression, probably by mediating the inactivation or degradation of the metR transcription factor. This Arthroderma benhamiae (strain ATCC MYA-4681 / CBS 112371) (Trichophyton mentagrophytes) protein is Probable E3 ubiquitin ligase complex SCF subunit sconB (sconB).